The sequence spans 139 residues: Sec-independent protein translocase protein TatB (139 aa).

A helical transmembrane segment spans residues 1 to 21 (MFDIGFTELLLVGLVALMVLG). Positions 69 to 139 (LDLEREMKQS…PLRSDRPSEP (71 aa)) are disordered. Residues 80–95 (MPPPASNPAATPPSPP) are compositionally biased toward pro residues.

The protein belongs to the TatB family. In terms of assembly, the Tat system comprises two distinct complexes: a TatABC complex, containing multiple copies of TatA, TatB and TatC subunits, and a separate TatA complex, containing only TatA subunits. Substrates initially bind to the TatABC complex, which probably triggers association of the separate TatA complex to form the active translocon.

It localises to the cell inner membrane. Its function is as follows. Part of the twin-arginine translocation (Tat) system that transports large folded proteins containing a characteristic twin-arginine motif in their signal peptide across membranes. Together with TatC, TatB is part of a receptor directly interacting with Tat signal peptides. TatB may form an oligomeric binding site that transiently accommodates folded Tat precursor proteins before their translocation. The chain is Sec-independent protein translocase protein TatB from Stutzerimonas stutzeri (strain A1501) (Pseudomonas stutzeri).